The primary structure comprises 1199 residues: DNA-directed RNA polymerase subunit beta' (1199 aa).

Positions 60, 62, 75, and 78 each coordinate Zn(2+). The Mg(2+) site is built by aspartate 449, aspartate 451, and aspartate 453. Zn(2+)-binding residues include cysteine 818, cysteine 892, cysteine 899, and cysteine 902.

This sequence belongs to the RNA polymerase beta' chain family. RNAP is composed of a core of 2 alpha, a beta and a beta' subunit. The core is associated with a delta subunit, and at least one of epsilon or omega. When a sigma factor is associated with the core the holoenzyme is formed, which can initiate transcription. The cofactor is Mg(2+). Zn(2+) is required as a cofactor.

The catalysed reaction is RNA(n) + a ribonucleoside 5'-triphosphate = RNA(n+1) + diphosphate. DNA-dependent RNA polymerase catalyzes the transcription of DNA into RNA using the four ribonucleoside triphosphates as substrates. The chain is DNA-directed RNA polymerase subunit beta' from Bacillus subtilis (strain 168).